The chain runs to 347 residues: NADH-quinone oxidoreductase subunit H 1 (347 aa).

The next 9 helical transmembrane spans lie at 13–33, 50–70, 82–102, 115–135, 161–181, 198–218, 263–283, 286–306, and 321–341; these read IIMI…IAYV, PNVV…KFVF, AVFL…WAVV, VGIL…IMGG, IGFV…TDIV, FLDW…ISAL, CALT…IWIL, VPGI…FAMV, and LGWK…AFVL.

This sequence belongs to the complex I subunit 1 family. As to quaternary structure, NDH-1 is composed of 14 different subunits. Subunits NuoA, H, J, K, L, M, N constitute the membrane sector of the complex.

Its subcellular location is the cell inner membrane. It carries out the reaction a quinone + NADH + 5 H(+)(in) = a quinol + NAD(+) + 4 H(+)(out). Functionally, NDH-1 shuttles electrons from NADH, via FMN and iron-sulfur (Fe-S) centers, to quinones in the respiratory chain. The immediate electron acceptor for the enzyme in this species is believed to be ubiquinone. Couples the redox reaction to proton translocation (for every two electrons transferred, four hydrogen ions are translocated across the cytoplasmic membrane), and thus conserves the redox energy in a proton gradient. This subunit may bind ubiquinone. The sequence is that of NADH-quinone oxidoreductase subunit H 1 from Rhizobium etli (strain ATCC 51251 / DSM 11541 / JCM 21823 / NBRC 15573 / CFN 42).